The sequence spans 512 residues: ATP synthase subunit alpha (512 aa).

Residue 169–176 (GDRQTGKT) participates in ATP binding.

The protein belongs to the ATPase alpha/beta chains family. F-type ATPases have 2 components, CF(1) - the catalytic core - and CF(0) - the membrane proton channel. CF(1) has five subunits: alpha(3), beta(3), gamma(1), delta(1), epsilon(1). CF(0) has three main subunits: a(1), b(2) and c(9-12). The alpha and beta chains form an alternating ring which encloses part of the gamma chain. CF(1) is attached to CF(0) by a central stalk formed by the gamma and epsilon chains, while a peripheral stalk is formed by the delta and b chains.

The protein localises to the cell inner membrane. It carries out the reaction ATP + H2O + 4 H(+)(in) = ADP + phosphate + 5 H(+)(out). In terms of biological role, produces ATP from ADP in the presence of a proton gradient across the membrane. The alpha chain is a regulatory subunit. This chain is ATP synthase subunit alpha, found in Orientia tsutsugamushi (strain Boryong) (Rickettsia tsutsugamushi).